The primary structure comprises 243 residues: LexA repressor (243 aa).

Residues 1 to 30 (MSDDTGEFTDGSTESPADADGAGRRRAVDN) are disordered. Basic and acidic residues predominate over residues 21-30 (GAGRRRAVDN). The H-T-H motif DNA-binding region spans 56-76 (IREIGDAVGLTSTSSVAHQLR). Active-site for autocatalytic cleavage activity residues include Ser-167 and Lys-204.

Belongs to the peptidase S24 family. In terms of assembly, homodimer.

The catalysed reaction is Hydrolysis of Ala-|-Gly bond in repressor LexA.. In terms of biological role, represses a number of genes involved in the response to DNA damage (SOS response), including recA and lexA. In the presence of single-stranded DNA, RecA interacts with LexA causing an autocatalytic cleavage which disrupts the DNA-binding part of LexA, leading to derepression of the SOS regulon and eventually DNA repair. The polypeptide is LexA repressor (Mycolicibacterium smegmatis (strain ATCC 700084 / mc(2)155) (Mycobacterium smegmatis)).